The following is a 443-amino-acid chain: UDP-N-acetylmuramate--L-alanine ligase (443 aa).

110-116 (GAHGKTS) provides a ligand contact to ATP.

Belongs to the MurCDEF family.

Its subcellular location is the cytoplasm. It carries out the reaction UDP-N-acetyl-alpha-D-muramate + L-alanine + ATP = UDP-N-acetyl-alpha-D-muramoyl-L-alanine + ADP + phosphate + H(+). Its pathway is cell wall biogenesis; peptidoglycan biosynthesis. Cell wall formation. The polypeptide is UDP-N-acetylmuramate--L-alanine ligase (Lactococcus lactis subsp. cremoris (strain MG1363)).